The following is a 372-amino-acid chain: MNNEGSAVINEDDDTSLLVVILDCNVYSWGNREKSLQDAISGMNDDNDSSSRYNGSTTIGNNNNNNNNNNSNNNNNVNKRLINTSKNNYIGFNKFLEHFMVFINAYLMLNQENQLAIICSKIGESSFVFPQSNIDQYQQEQQELEQRQLNENGELLPTPNKTIQGQILAKLQKLDLEIKHDQTDILSSSFSASMSIALCYINRIKRETPTIKPRILVFNISPDVSSQYISVMNCIFSSQKQSIPVDSCILSQSDSTFLQQASHLTSGIYLKPQKQELLSQYLLTTFLLDTLSRKSLAYPTLKSVDYRASCFCHKRIVDIGYVCSVCLSIFCGHSSSCSTCGTKFSLKIDLRKQLNNNPTTTTSATSTVNNKS.

Residues 40–78 (ISGMNDDNDSSSRYNGSTTIGNNNNNNNNNNSNNNNNVN) form a disordered region. Positions 50–60 (SSRYNGSTTIG) are enriched in polar residues. Over residues 61 to 78 (NNNNNNNNNNSNNNNNVN) the composition is skewed to low complexity. The C4-type zinc finger occupies 323 to 340 (CSVCLSIFCGHSSSCSTC).

This sequence belongs to the TFB4 family. In terms of assembly, component of the 7-subunit TFIIH core complex composed of XPB/repB, XPD/repD, gtf2h1, gtf2h2, gtf2h3, gtf2h4 and gtf2h5, which is active in NER. The core complex associates with the 3-subunit CDK-activating kinase (CAK) module composed of cycH/cyclin H, cdk7 and mnat1 to form the 10-subunit holoenzyme (holo-TFIIH) active in transcription.

The protein resides in the nucleus. In terms of biological role, component of the general transcription and DNA repair factor IIH (TFIIH) core complex, which is involved in general and transcription-coupled nucleotide excision repair (NER) of damaged DNA and, when complexed to CAK, in RNA transcription by RNA polymerase II. In NER, TFIIH acts by opening DNA around the lesion to allow the excision of the damaged oligonucleotide and its replacement by a new DNA fragment. In transcription, TFIIH has an essential role in transcription initiation. When the pre-initiation complex (PIC) has been established, TFIIH is required for promoter opening and promoter escape. Phosphorylation of the C-terminal tail (CTD) of the largest subunit of RNA polymerase II by the kinase module CAK controls the initiation of transcription. The chain is General transcription factor IIH subunit 3 (gtf2h3) from Dictyostelium discoideum (Social amoeba).